The sequence spans 434 residues: 23S rRNA (uracil(1939)-C(5))-methyltransferase RlmD (434 aa).

Residues 10–68 (RVTTRQIITVTVNDLDPFGQGVARHQGKALFVSGVLPHEQAEVVLVEDKKQYARAEVKR) form the TRAM domain. [4Fe-4S] cluster is bound by residues Cys-81, Cys-87, Cys-90, and Cys-162. The S-adenosyl-L-methionine site is built by Gln-265, Phe-294, Asn-299, Glu-315, Asn-342, and Asp-363. Residue Cys-389 is the Nucleophile of the active site.

The protein belongs to the class I-like SAM-binding methyltransferase superfamily. RNA M5U methyltransferase family. RlmD subfamily.

It carries out the reaction uridine(1939) in 23S rRNA + S-adenosyl-L-methionine = 5-methyluridine(1939) in 23S rRNA + S-adenosyl-L-homocysteine + H(+). Functionally, catalyzes the formation of 5-methyl-uridine at position 1939 (m5U1939) in 23S rRNA. The protein is 23S rRNA (uracil(1939)-C(5))-methyltransferase RlmD of Klebsiella pneumoniae subsp. pneumoniae (strain ATCC 700721 / MGH 78578).